The sequence spans 332 residues: Holliday junction branch migration complex subunit RuvB (332 aa).

Positions 1-181 (MARILDNNVM…FGITGHMEYY (181 aa)) are large ATPase domain (RuvB-L). ATP-binding positions include L20, R21, G62, K65, T66, T67, 128 to 130 (EDF), R171, Y181, and R218. Mg(2+) is bound at residue T66. Positions 182 to 252 (QEKDLTEIVE…ITDRALTMLD (71 aa)) are small ATPAse domain (RuvB-S). The segment at 255–332 (REGLDYIDQK…RHLGYPYQNT (78 aa)) is head domain (RuvB-H). DNA is bound by residues R291, R310, R312, and R315.

Belongs to the RuvB family. In terms of assembly, homohexamer. Forms an RuvA(8)-RuvB(12)-Holliday junction (HJ) complex. HJ DNA is sandwiched between 2 RuvA tetramers; dsDNA enters through RuvA and exits via RuvB. An RuvB hexamer assembles on each DNA strand where it exits the tetramer. Each RuvB hexamer is contacted by two RuvA subunits (via domain III) on 2 adjacent RuvB subunits; this complex drives branch migration. In the full resolvosome a probable DNA-RuvA(4)-RuvB(12)-RuvC(2) complex forms which resolves the HJ.

The protein resides in the cytoplasm. It catalyses the reaction ATP + H2O = ADP + phosphate + H(+). The RuvA-RuvB-RuvC complex processes Holliday junction (HJ) DNA during genetic recombination and DNA repair, while the RuvA-RuvB complex plays an important role in the rescue of blocked DNA replication forks via replication fork reversal (RFR). RuvA specifically binds to HJ cruciform DNA, conferring on it an open structure. The RuvB hexamer acts as an ATP-dependent pump, pulling dsDNA into and through the RuvAB complex. RuvB forms 2 homohexamers on either side of HJ DNA bound by 1 or 2 RuvA tetramers; 4 subunits per hexamer contact DNA at a time. Coordinated motions by a converter formed by DNA-disengaged RuvB subunits stimulates ATP hydrolysis and nucleotide exchange. Immobilization of the converter enables RuvB to convert the ATP-contained energy into a lever motion, pulling 2 nucleotides of DNA out of the RuvA tetramer per ATP hydrolyzed, thus driving DNA branch migration. The RuvB motors rotate together with the DNA substrate, which together with the progressing nucleotide cycle form the mechanistic basis for DNA recombination by continuous HJ branch migration. Branch migration allows RuvC to scan DNA until it finds its consensus sequence, where it cleaves and resolves cruciform DNA. This Streptococcus pyogenes serotype M1 protein is Holliday junction branch migration complex subunit RuvB.